The sequence spans 84 residues: Conotoxin Am6.1 (84 aa).

The first 19 residues, 1–19 (MEKLTILLLVAAVLMSTHA), serve as a signal peptide directing secretion. Residues 20–47 (MFQGGGEKSRKAINFSETRKLARNKQKR) constitute a propeptide that is removed on maturation. 3 disulfides stabilise this stretch: C48/C62, C55/C66, and C61/C71. The residue at position 51 (W51) is a 6'-bromotryptophan; in Am6.1b. Residues E60 and E64 each carry the 4-carboxyglutamate; partial; in Am6.1b and Am6.1c modification. Residues 78-84 (RTTSHPI) constitute a propeptide that is removed on maturation.

Belongs to the conotoxin O2 family. Post-translationally, three forms of this peptides have been described. The unmodified Am6.1a (Am3286) is not detected in the venom; Am6.1b (Am3408) is only Trp brominated, while Am6.1c (Am3452) is both Trp brominated and Glu gamma-carboxyglutamated. Both Am6.1b and Am6.1c are detected in the venom. In terms of tissue distribution, expressed by the venom duct.

The protein resides in the secreted. Gamma-conotoxins may act on voltage-gated non-specific cation pacemaker channels (HCN). The polypeptide is Conotoxin Am6.1 (Conus amadis (Amadis cone)).